A 314-amino-acid polypeptide reads, in one-letter code: MQITFLGTSSGVPTRSRNVSSVALRLPQRAEIWLFDCGEGTQHQLLRSELKSSQLRRIFITHMHGDHIFGLMGLLASCGLAGNTERIDIYGPAGLEEYLQACRRYSQTHFSYPIQVHTVQPGEVFSDQDYSVVCAPLKHRVPAFGYRIQECDRPGRFDTDKAISMGIPAGPLYGRLKRGERITLPDGRTFFGQDFCGPKEIGRKIAYCTDTIYCPEAVELSRDADVVIHESTFSHQEAELAYQRLHSTSTMAAQVAQAAGAKKLFLTHFSPRYAPNSATGLQELLTEASAIFPHTELAYDFLNYQVPRRTLTTA.

Residues His62, His64, Asp66, His67, His139, Asp210, and His268 each coordinate Zn(2+). Asp66 acts as the Proton acceptor in catalysis.

The protein belongs to the RNase Z family. Homodimer. Zn(2+) is required as a cofactor.

The enzyme catalyses Endonucleolytic cleavage of RNA, removing extra 3' nucleotides from tRNA precursor, generating 3' termini of tRNAs. A 3'-hydroxy group is left at the tRNA terminus and a 5'-phosphoryl group is left at the trailer molecule.. Zinc phosphodiesterase, which displays some tRNA 3'-processing endonuclease activity. Probably involved in tRNA maturation, by removing a 3'-trailer from precursor tRNA. The protein is Ribonuclease Z of Acaryochloris marina (strain MBIC 11017).